A 234-amino-acid polypeptide reads, in one-letter code: Phosphatidylcholine synthase (234 aa).

Residues 1–3 (MKN) lie on the Cytoplasmic side of the membrane. Residues 4–24 (INLILAWLVHIFTASGLIVGL) form a helical membrane-spanning segment. Residues 25-26 (YS) are Periplasmic-facing. Residues 27-47 (IISIVNGNYSLLLKLTVIGLI) form a helical membrane-spanning segment. Residues 48-75 (IDGIDGTMARKLKVKELIPEIDGTLLDN) are Cytoplasmic-facing. A helical transmembrane segment spans residues 76 to 96 (ITDYINYTFIPVIFFYLGEFI). At 97-98 (EE) the chain is on the periplasmic side. Residues 99-116 (KYKVAICIGILLSSAYQF) form a helical membrane-spanning segment. The Cytoplasmic portion of the chain corresponds to 117 to 126 (SRTDAKTNDN). A helical transmembrane segment spans residues 127–147 (YFRGFPSLWNLFVILNIIFKM). Residues 148–149 (EQ) are Periplasmic-facing. Residues 150–170 (ITNLITMSICIITSFIPIKFI) form a helical membrane-spanning segment. Over 171–180 (YPSKTKELRK) the chain is Cytoplasmic. The chain crosses the membrane as a helical span at residues 181–201 (ITIPITIISCLIFVVSIFSEL). The Periplasmic segment spans residues 202–207 (STTALK). A helical membrane pass occupies residues 208 to 228 (MAKTVLILYFAYLTLASIYLT). Residues 229-234 (YKTRNR) lie on the Cytoplasmic side of the membrane.

Belongs to the CDP-alcohol phosphatidyltransferase class-I family. The cofactor is Mn(2+).

It is found in the cell inner membrane. The catalysed reaction is a CDP-1,2-diacyl-sn-glycerol + choline = a 1,2-diacyl-sn-glycero-3-phosphocholine + CMP + H(+). Functionally, condenses choline with CDP-diglyceride to produce phosphatidylcholine and CMP. In Borreliella burgdorferi (strain ATCC 35210 / DSM 4680 / CIP 102532 / B31) (Borrelia burgdorferi), this protein is Phosphatidylcholine synthase.